The primary structure comprises 107 residues: Replication restart protein PriB (107 aa).

Residues 8-107 (IENRLSLIGV…LHAEHIELLD (100 aa)) form the SSB domain.

The protein belongs to the PriB family. Homodimer. Interacts with PriA and DnaT. Component of the replication restart primosome. Primosome assembly occurs via a 'hand-off' mechanism. PriA binds to replication forks, subsequently PriB then DnaT bind; DnaT then displaces ssDNA to generate the helicase loading substrate.

Functionally, involved in the restart of stalled replication forks, which reloads the replicative helicase on sites other than the origin of replication; the PriA-PriB pathway is the major replication restart pathway. During primosome assembly it facilitates complex formation between PriA and DnaT on DNA; stabilizes PriA on DNA. Stimulates the DNA unwinding activity of PriA helicase. The polypeptide is Replication restart protein PriB (Actinobacillus succinogenes (strain ATCC 55618 / DSM 22257 / CCUG 43843 / 130Z)).